An 86-amino-acid chain; its full sequence is Small ribosomal subunit protein bS16 (86 aa).

This sequence belongs to the bacterial ribosomal protein bS16 family.

This chain is Small ribosomal subunit protein bS16, found in Nostoc punctiforme (strain ATCC 29133 / PCC 73102).